A 267-amino-acid polypeptide reads, in one-letter code: 2-oxo-hept-4-ene-1,7-dioate hydratase (267 aa).

Positions 106, 108, and 139 each coordinate Mg(2+).

It belongs to the hydratase/decarboxylase family. In terms of assembly, homodecamer. The cofactor is Mg(2+).

The catalysed reaction is (4Z)-2-oxohept-4-enedioate + H2O = (4S)-4-hydroxy-2-oxoheptanedioate. Its pathway is aromatic compound metabolism; 4-hydroxyphenylacetate degradation; pyruvate and succinate semialdehyde from 4-hydroxyphenylacetate: step 6/7. Functionally, transforms 2-oxo-hept-4-ene-1,7-dioate (OHED) into 4-hydroxy-2-oxoheptanedioate, a step in the 4-hydroxyphenylacetic acid (4-HPA) degradation pathway. This is 2-oxo-hept-4-ene-1,7-dioate hydratase from Escherichia coli.